The primary structure comprises 333 residues: Lipoyl synthase (333 aa).

[4Fe-4S] cluster-binding residues include cysteine 56, cysteine 61, cysteine 67, cysteine 82, cysteine 86, cysteine 89, and serine 293. The region spanning 68–282 is the Radical SAM core domain; sequence WEDREATFLI…GRVGAELGFS (215 aa). The disordered stretch occupies residues 301 to 333; it reads QQAMTARDQDRSEMSVPPESVSENSHGQRPSPW. Residues 314 to 325 show a composition bias toward low complexity; the sequence is MSVPPESVSENS.

This sequence belongs to the radical SAM superfamily. Lipoyl synthase family. Requires [4Fe-4S] cluster as cofactor.

Its subcellular location is the cytoplasm. It catalyses the reaction [[Fe-S] cluster scaffold protein carrying a second [4Fe-4S](2+) cluster] + N(6)-octanoyl-L-lysyl-[protein] + 2 oxidized [2Fe-2S]-[ferredoxin] + 2 S-adenosyl-L-methionine + 4 H(+) = [[Fe-S] cluster scaffold protein] + N(6)-[(R)-dihydrolipoyl]-L-lysyl-[protein] + 4 Fe(3+) + 2 hydrogen sulfide + 2 5'-deoxyadenosine + 2 L-methionine + 2 reduced [2Fe-2S]-[ferredoxin]. It participates in protein modification; protein lipoylation via endogenous pathway; protein N(6)-(lipoyl)lysine from octanoyl-[acyl-carrier-protein]: step 2/2. Catalyzes the radical-mediated insertion of two sulfur atoms into the C-6 and C-8 positions of the octanoyl moiety bound to the lipoyl domains of lipoate-dependent enzymes, thereby converting the octanoylated domains into lipoylated derivatives. The chain is Lipoyl synthase from Frankia casuarinae (strain DSM 45818 / CECT 9043 / HFP020203 / CcI3).